The chain runs to 427 residues: Adenylosuccinate synthetase (427 aa).

Residues 12–18 (GDEGKGK) and 40–42 (GHT) contribute to the GTP site. Residue D13 is the Proton acceptor of the active site. Positions 13 and 40 each coordinate Mg(2+). Residues 13 to 16 (DEGK), 38 to 41 (NAGH), T128, R142, Q223, T238, and R302 contribute to the IMP site. H41 (proton donor) is an active-site residue. 298-304 (VTTGRAR) is a binding site for substrate. GTP is bound by residues R304, 330–332 (KLD), and 412–414 (GVG).

Belongs to the adenylosuccinate synthetase family. As to quaternary structure, homodimer. Requires Mg(2+) as cofactor.

The protein localises to the cytoplasm. The enzyme catalyses IMP + L-aspartate + GTP = N(6)-(1,2-dicarboxyethyl)-AMP + GDP + phosphate + 2 H(+). Its pathway is purine metabolism; AMP biosynthesis via de novo pathway; AMP from IMP: step 1/2. In terms of biological role, plays an important role in the de novo pathway of purine nucleotide biosynthesis. Catalyzes the first committed step in the biosynthesis of AMP from IMP. This is Adenylosuccinate synthetase from Frankia casuarinae (strain DSM 45818 / CECT 9043 / HFP020203 / CcI3).